A 348-amino-acid chain; its full sequence is Tetraacyldisaccharide 4'-kinase (348 aa).

54-61 (TVGGAGKT) provides a ligand contact to ATP.

The protein belongs to the LpxK family.

It catalyses the reaction a lipid A disaccharide + ATP = a lipid IVA + ADP + H(+). Its pathway is glycolipid biosynthesis; lipid IV(A) biosynthesis; lipid IV(A) from (3R)-3-hydroxytetradecanoyl-[acyl-carrier-protein] and UDP-N-acetyl-alpha-D-glucosamine: step 6/6. Transfers the gamma-phosphate of ATP to the 4'-position of a tetraacyldisaccharide 1-phosphate intermediate (termed DS-1-P) to form tetraacyldisaccharide 1,4'-bis-phosphate (lipid IVA). This Agrobacterium fabrum (strain C58 / ATCC 33970) (Agrobacterium tumefaciens (strain C58)) protein is Tetraacyldisaccharide 4'-kinase.